Here is a 198-residue protein sequence, read N- to C-terminus: MNLIPTVIEQTSRGERAYDIYSRLLKDRIIMLGSAIDDNVANSIVSQLLFLDAQDPEKDIFLYINSPGGSISAGMAIYDTMNFVKADVQTIGMGMAASMGSFLLTAGANGKRFALPNAEIMIHQPLGGAQGQATEIEIAARHILKIKERMNTIMAEKTGQPYEVIARDTDRDNFMTAQEAKDYGLIDDIIVNKSGLKG.

Residue Ser-98 is the Nucleophile of the active site. His-123 is a catalytic residue.

This sequence belongs to the peptidase S14 family. Fourteen ClpP subunits assemble into 2 heptameric rings which stack back to back to give a disk-like structure with a central cavity, resembling the structure of eukaryotic proteasomes.

It localises to the cytoplasm. It carries out the reaction Hydrolysis of proteins to small peptides in the presence of ATP and magnesium. alpha-casein is the usual test substrate. In the absence of ATP, only oligopeptides shorter than five residues are hydrolyzed (such as succinyl-Leu-Tyr-|-NHMec, and Leu-Tyr-Leu-|-Tyr-Trp, in which cleavage of the -Tyr-|-Leu- and -Tyr-|-Trp bonds also occurs).. Its function is as follows. Cleaves peptides in various proteins in a process that requires ATP hydrolysis. Has a chymotrypsin-like activity. Plays a major role in the degradation of misfolded proteins. The chain is ATP-dependent Clp protease proteolytic subunit from Listeria innocua serovar 6a (strain ATCC BAA-680 / CLIP 11262).